The primary structure comprises 592 residues: Serine/threonine-protein kinase ksg1 (592 aa).

The span at M1–T10 shows a compositional bias: polar residues. The tract at residues M1–N92 is disordered. A compositionally biased stretch (acidic residues) spans E11–S22. The segment covering S27–N37 has biased composition (basic and acidic residues). Positions P42–S68 are enriched in polar residues. A phosphoserine mark is found at S64 and S69. The span at S80 to N92 shows a compositional bias: polar residues. A Protein kinase domain is found at F99–F366. ATP-binding positions include S109–S111 and K128. The segment at L130–F175 is PIF-pocket. ATP is bound by residues S178 to A180 and E184. D223 serves as the catalytic Proton acceptor. Positions 227 and 241 each coordinate ATP. The region spanning I461–S572 is the PH domain.

The protein belongs to the protein kinase superfamily. AGC Ser/Thr protein kinase family. PDPK1 subfamily.

It is found in the cytoplasm. It carries out the reaction L-seryl-[protein] + ATP = O-phospho-L-seryl-[protein] + ADP + H(+). It catalyses the reaction L-threonyl-[protein] + ATP = O-phospho-L-threonyl-[protein] + ADP + H(+). Involved in the control of sexual development and cell growth under stressed conditions. Phosphorylates AGC kinase gad8 at 'Thr-387', activating gad8 kinase activity and promoting sexual development. Phosphorylates AGC kinase psk1 at 'Ser-248', activating psk1 kinase activity and promoting phosphorylation of ribosomal protein S6. The polypeptide is Serine/threonine-protein kinase ksg1 (Schizosaccharomyces pombe (strain 972 / ATCC 24843) (Fission yeast)).